A 301-amino-acid polypeptide reads, in one-letter code: Ribosomal protein L11 methyltransferase (301 aa).

S-adenosyl-L-methionine contacts are provided by Thr146, Gly167, Asp189, and Asn237.

Belongs to the methyltransferase superfamily. PrmA family.

It is found in the cytoplasm. It catalyses the reaction L-lysyl-[protein] + 3 S-adenosyl-L-methionine = N(6),N(6),N(6)-trimethyl-L-lysyl-[protein] + 3 S-adenosyl-L-homocysteine + 3 H(+). Functionally, methylates ribosomal protein L11. The sequence is that of Ribosomal protein L11 methyltransferase from Prochlorococcus marinus (strain MIT 9313).